A 448-amino-acid polypeptide reads, in one-letter code: Glucan 1,3-beta-glucosidase I/II (448 aa).

Positions M1–A19 are cleaved as a signal peptide. A propeptide spanning residues T20–R40 is cleaved from the precursor. N165 carries N-linked (GlcNAc...) asparagine glycosylation. The Proton donor role is filled by E232. N325 carries an N-linked (GlcNAc...) asparagine glycan. The active-site Nucleophile is the E334.

The protein belongs to the glycosyl hydrolase 5 (cellulase A) family.

The protein resides in the secreted. It is found in the cell wall. The enzyme catalyses Successive hydrolysis of beta-D-glucose units from the non-reducing ends of (1-&gt;3)-beta-D-glucans, releasing alpha-glucose.. Glucanases possibly play a role in cell expansion during growth, in cell-cell fusion during mating, and in spore release during sporulation. This enzyme hydrolyzes both 1,3-beta- and 1,6-beta-linkages and even has beta-glucosidase activity. It could also function biosynthetically as a transglycosylase. The chain is Glucan 1,3-beta-glucosidase I/II (EXG1) from Saccharomyces cerevisiae (strain ATCC 204508 / S288c) (Baker's yeast).